The primary structure comprises 310 residues: MTAQTQELTKAQQYNFNKLQKRIRRNTGQAIADFNMIEDGDRIMVCLSGGKDSFTMLDILMSLQKSAPISFELVAVNLDQKQPGFPEHVLPEYLESLGVEYKIVEEDTYAIVQDKVPEGKTTCALCSRLRRGILYRTAKELGATKIALGHHRDDILETLFLNMFYGGKMKGMPPKLVSDNGEHVVIRPLAYCREKDIIKYSDMRGYPIIPCNLCGSQPNLQRQAVKQMLNDWDKRFPGRIETMFRAMQNVVPSHLADFSLFDFKSIDKNSGVINGGDIGFDKEEIAPQVVEDEDLVMEFDPSLQLNVTNI.

Residues Ser48 to Ser53 carry the PP-loop motif motif. [4Fe-4S] cluster is bound by residues Cys123, Cys126, and Cys214.

The protein belongs to the TtcA family. Homodimer. Mg(2+) is required as a cofactor. It depends on [4Fe-4S] cluster as a cofactor.

It is found in the cytoplasm. It catalyses the reaction cytidine(32) in tRNA + S-sulfanyl-L-cysteinyl-[cysteine desulfurase] + AH2 + ATP = 2-thiocytidine(32) in tRNA + L-cysteinyl-[cysteine desulfurase] + A + AMP + diphosphate + H(+). It participates in tRNA modification. Functionally, catalyzes the ATP-dependent 2-thiolation of cytidine in position 32 of tRNA, to form 2-thiocytidine (s(2)C32). The sulfur atoms are provided by the cysteine/cysteine desulfurase (IscS) system. In Vibrio cholerae serotype O1 (strain ATCC 39315 / El Tor Inaba N16961), this protein is tRNA-cytidine(32) 2-sulfurtransferase.